The chain runs to 139 residues: Large ribosomal subunit protein uL16 (139 aa).

Positions 1–20 are enriched in basic residues; it reads MLIPKRTKYRKQHRPVRRGM. The tract at residues 1–21 is disordered; it reads MLIPKRTKYRKQHRPVRRGMS.

Belongs to the universal ribosomal protein uL16 family. As to quaternary structure, part of the 50S ribosomal subunit.

In terms of biological role, binds 23S rRNA and is also seen to make contacts with the A and possibly P site tRNAs. The sequence is that of Large ribosomal subunit protein uL16 from Bifidobacterium adolescentis (strain ATCC 15703 / DSM 20083 / NCTC 11814 / E194a).